Consider the following 450-residue polypeptide: MEEPQKSYVNTMDLERDEPLKSTGPQISVSEFSCHCCYDILVNPTTLNCGHSFCRHCLALWWASSKKTECPECREKWEGFPKVSILLRDAIEKLFPDAIRLRFEDIQQNNDIVQSLAAFQKYGNDQIPLAPNTGRANQQMGGGFFSGVLTALTGVAVVLLVYHWSSRESEHDLLVHKAVAKWTAEEVVLWLEQLGPWASLYRERFLSERVNGRLLLTLTEEEFSKTPYTIENSSHRRAILMELERVKALGVKPPQNLWEYKAVNPGRSLFLLYALKSSPRLSLLYLYLFDYTDTFLPFIHTICPLQEDSSGEDIVTKLLDLKEPTWKQWREFLVKYSFLPYQLIAEFAWDWLEVHYWTSRFLIINAMLLSVLELFSFWRIWSRSELKTVPQRMWSHFWKVSTQGLFVAMFWPLIPQFVCNCLFYWALYFNPIINIDLVVKELRRLETQVL.

The segment at 1–20 is disordered; it reads MEEPQKSYVNTMDLERDEPL. Topologically, residues 1 to 140 are cytoplasmic; sequence MEEPQKSYVN…PNTGRANQQM (140 aa). The RING-type zinc finger occupies 34-74; it reads CHCCYDILVNPTTLNCGHSFCRHCLALWWASSKKTECPECR. The helical transmembrane segment at 141-161 threads the bilayer; the sequence is GGGFFSGVLTALTGVAVVLLV. The Lumenal portion of the chain corresponds to 162-331; it reads YHWSSRESEH…KEPTWKQWRE (170 aa). Residues 182 to 249 enclose the SAM domain; the sequence is WTAEEVVLWL…LMELERVKAL (68 aa). Asparagine 232 is a glycosylation site (N-linked (GlcNAc...) asparagine). A helical transmembrane segment spans residues 332–352; that stretch reads FLVKYSFLPYQLIAEFAWDWL. The Cytoplasmic portion of the chain corresponds to 353–360; sequence EVHYWTSR. Residues 361 to 381 traverse the membrane as a helical segment; that stretch reads FLIINAMLLSVLELFSFWRIW. At 382–404 the chain is on the lumenal side; that stretch reads SRSELKTVPQRMWSHFWKVSTQG. Residues 405–425 form a helical membrane-spanning segment; the sequence is LFVAMFWPLIPQFVCNCLFYW. The Cytoplasmic segment spans residues 426 to 450; it reads ALYFNPIINIDLVVKELRRLETQVL.

Interacts with CASP8, BCL2 and BCL2L1 through SAM domain and also with HIP1, IFT57, ESRRBL1 and BCAP31. Interacts with NGFR; this interaction inhibits NF-kappa-B and JNK-related signaling pathways. In terms of processing, mediates RING-dependent self-ubiquitination leading to proteasomal degradation. In terms of tissue distribution, expressed highly in brain, moderately in small intestine, weakly in testes and only faintly in liver and skeletal muscle. Not expressed in heart, kidney, lung and spleen.

The protein localises to the endoplasmic reticulum membrane. The enzyme catalyses S-ubiquitinyl-[E2 ubiquitin-conjugating enzyme]-L-cysteine + [acceptor protein]-L-lysine = [E2 ubiquitin-conjugating enzyme]-L-cysteine + N(6)-ubiquitinyl-[acceptor protein]-L-lysine.. Its function is as follows. Membrane-bound E3 ubiquitin ligase that plays a role in several processes including apoptosis regulation or reticulum endoplasmic stress. Has anti-apoptotic activity, both for apoptosis triggered via death-receptors and via mitochondrial factors. Contributes to the dynamic control of IRE1/ERN1 signaling during ER stress by inducing BAX inhibitor 1/TMBIM6 proteasomal degradation. Promotes the activation of TGF-beta signaling by mediating the 'Lys-63'-linked ubiquitination of TGFBR1 which is critical to activate the pathway. Together with NGFR, negatively regulates NF-kappa-B and JNK-related signaling pathways. Promotes the proteasome-mediated degradation of PNPLA3, a protein involveld in lipid metabolism. The sequence is that of Bifunctional apoptosis regulator (BFAR) from Homo sapiens (Human).